The sequence spans 501 residues: ATP synthase subunit beta (501 aa).

Residue 153–160 (GGAGVGKT) coordinates ATP.

This sequence belongs to the ATPase alpha/beta chains family. F-type ATPases have 2 components, CF(1) - the catalytic core - and CF(0) - the membrane proton channel. CF(1) has five subunits: alpha(3), beta(3), gamma(1), delta(1), epsilon(1). CF(0) has three main subunits: a(1), b(2) and c(9-12). The alpha and beta chains form an alternating ring which encloses part of the gamma chain. CF(1) is attached to CF(0) by a central stalk formed by the gamma and epsilon chains, while a peripheral stalk is formed by the delta and b chains.

The protein localises to the cell inner membrane. The enzyme catalyses ATP + H2O + 4 H(+)(in) = ADP + phosphate + 5 H(+)(out). In terms of biological role, produces ATP from ADP in the presence of a proton gradient across the membrane. The catalytic sites are hosted primarily by the beta subunits. In Cytophaga hutchinsonii (strain ATCC 33406 / DSM 1761 / CIP 103989 / NBRC 15051 / NCIMB 9469 / D465), this protein is ATP synthase subunit beta.